A 445-amino-acid chain; its full sequence is StAR-related lipid transfer protein 3 (445 aa).

Residues 1-51 (MSKLPRELTRDLERSLPAVASLGSSLSHSQSLSSHLLPPPEKRRAISDVRR) are Cytoplasmic-facing. An MENTAL domain is found at 46 to 217 (ISDVRRTFCL…YSPPESFAGS (172 aa)). Residues 52 to 72 (TFCLFVTFDLLFISLLWIIEL) traverse the membrane as a helical segment. The Extracellular segment spans residues 73–94 (NTNTGIRKNLEQEIIQYNFKTS). The chain crosses the membrane as a helical span at residues 95-115 (FFDIFVLAFFRFSGLLLGYAV). Residues 116-120 (LRLRH) lie on the Cytoplasmic side of the membrane. Residues 121-141 (WWVIAVTTLVSSAFLIVKVIL) traverse the membrane as a helical segment. At 142–148 (SELLSKG) the chain is on the extracellular side. A helical transmembrane segment spans residues 149-169 (AFGYLLPIVSFVLAWLETWFL). Residues 170 to 445 (DFKVLPQEAE…QRISELGARA (276 aa)) lie on the Cytoplasmic side of the membrane. Residues 206–212 (QFYSPPE) carry the FFAT motif. Residue S209 is modified to Phosphoserine. Residues 230–443 (SFSAQEREYI…LRQRISELGA (214 aa)) enclose the START domain.

Belongs to the STARD3 family. Homodimer. Interacts (via the MENTAL domain) with STARD3NL. Interacts (via phosphorylated FFAT motif) with VAPA (via MSP domain). Interacts (via phosphorylated FFAT motif) with VAPB (via MSP domain). Interacts (via phosphorylated FFAT motif) with MOSPD2 (via MSP domain); this interaction allows enrichment of MOSPD2 around endosomes. Post-translationally, phosphorylation at Ser-209 is necessary and sufficient for the direct interaction of the phosphorylated FFAT motif with the MSP domain of MOSPD2, VAPA and VAPB and allows the tethering of two membranes that participates in the formation of ER-endosome contacts. Phosphorylation of the FFAT motif leads to conformation changes. Additional phosphorylations around the core FFAT motif (QFYSPPE) are not essential but strengthen the interaction with MOSPD2, VAPA and VAPB. Phosphorylation at Ser-209 of FFAT motif drives membrane tethering between the endoplasmic reticulum and late endosomes via interaction with VAPA and VAPB that in turn allows the efficient transport of sterol mediated by the START domain. In terms of tissue distribution, expressed in retina.

The protein localises to the late endosome membrane. It catalyses the reaction cholesterol(in) = cholesterol(out). Its function is as follows. Sterol-binding protein that mediates cholesterol transport from the endoplasmic reticulum to endosomes. The sterol transport mechanism is triggered by phosphorylation of FFAT motif that leads to membrane tethering between the endoplasmic reticulum and late endosomes via interaction with VAPA and VAPB. Acts as a lipid transfer protein that redirects sterol to the endosome at the expense of the cell membrane and favors membrane formation inside endosomes. May also mediate cholesterol transport between other membranes, such as mitochondria membrane or cell membrane. However, such results need additional experimental evidences; probably mainly mediates cholesterol transport from the endoplasmic reticulum to endosomes. Does not activate transcriptional cholesterol sensing. Able to bind other lipids, such as lutein, a xanthophyll carotenoids that form the macular pigment of the retina. This Homo sapiens (Human) protein is StAR-related lipid transfer protein 3.